A 304-amino-acid polypeptide reads, in one-letter code: MLPKVLFLMGPTASGKTALALELAENHNCEIISVDSALIYRGMDIGSAKPSIEELARGPHRLIDIRDPSESYSAADFRADALAEIEQIIRMGKTPLLVGGTMMYFKALLEGLSPLPSADDAIRADIQAEADAKGWETLHDQLRDIDPVSAERIHPNDPQRLSRALEVYRISGKSLTELTQTKSAPLPYDVVQFAIAPRERKVLHDLIAQRFRIMLQQGFIGEVTQLKARGDLHLDLPSMRCVGYRQCWQHLDGEFDYDTMVEKAVAATRQLAKRQLTWLRSWPELNWLESGAEGNLVTLMRHCR.

10–17 lines the ATP pocket; it reads GPTASGKT. Position 12-17 (12-17) interacts with substrate; it reads TASGKT. Interaction with substrate tRNA stretches follow at residues 35–38, 159–163, and 240–245; these read DSAL, QRLSR, and RCVGYR.

The protein belongs to the IPP transferase family. In terms of assembly, monomer. The cofactor is Mg(2+).

The catalysed reaction is adenosine(37) in tRNA + dimethylallyl diphosphate = N(6)-dimethylallyladenosine(37) in tRNA + diphosphate. Functionally, catalyzes the transfer of a dimethylallyl group onto the adenine at position 37 in tRNAs that read codons beginning with uridine, leading to the formation of N6-(dimethylallyl)adenosine (i(6)A). This Shewanella sp. (strain W3-18-1) protein is tRNA dimethylallyltransferase.